A 295-amino-acid chain; its full sequence is Transcription factor bHLH19 (295 aa).

A bHLH domain is found at 115–164 (VLAKEHVLAERKRREKLSEKFIALSALLPGLKKADKVTILDDAISRMKQL).

As to quaternary structure, homodimer. Expressed in roots and leaves.

The protein resides in the nucleus. The protein is Transcription factor bHLH19 (BHLH19) of Arabidopsis thaliana (Mouse-ear cress).